A 517-amino-acid chain; its full sequence is Putative thymidine phosphorylase (517 aa).

This sequence belongs to the thymidine/pyrimidine-nucleoside phosphorylase family. Type 2 subfamily.

The catalysed reaction is thymidine + phosphate = 2-deoxy-alpha-D-ribose 1-phosphate + thymine. The sequence is that of Putative thymidine phosphorylase from Legionella pneumophila (strain Paris).